Here is a 573-residue protein sequence, read N- to C-terminus: Protein FAM227B (573 aa).

Residues 429–485 (DNKKDFKRVKQRIKDDIKFLKEQQEQIDKELDRLQAKASKNLQEVKNDFENFLHKLR) adopt a coiled-coil conformation. Residues 497 to 521 (SASPSESLQSLQSPNSSLSSPAMSE) are compositionally biased toward low complexity. Residues 497–528 (SASPSESLQSLQSPNSSLSSPAMSEDFNSVEE) are disordered.

This sequence belongs to the FAM227 family.

This Rattus norvegicus (Rat) protein is Protein FAM227B (Fam227b).